We begin with the raw amino-acid sequence, 375 residues long: CD2 homolog (375 aa).

Residues 1–16 (MIIILIFLIIPNIVLS) form the signal peptide. The Extracellular segment spans residues 17–207 (IDYWVSFNKT…YLDFFQVASY (191 aa)). Asn-24, Asn-80, Asn-105, Asn-122, Asn-134, Asn-145, Asn-168, Asn-176, and Asn-183 each carry an N-linked (GlcNAc...) asparagine; by host glycan. 2 disulfides stabilise this stretch: Cys-123–Cys-190 and Cys-130–Cys-173. A helical membrane pass occupies residues 208–228 (MFYMIIFIATGIIASIFISII). At 229 to 375 (TFLSLRKRKK…ISLIHVDRII (147 aa)) the chain is on the cytoplasmic side. The segment at 242-278 (EIESPSPSESNEEEQCQHDDTTSIHEPSPREPLLPKP) is disordered. Over residues 256–270 (QCQHDDTTSIHEPSP) the composition is skewed to basic and acidic residues. A run of 5 repeats spans residues 305-310 (KLCPPP), 311-316 (KPCPPP), 317-322 (KPCPPP), 323-328 (KPCPPP), and 329-334 (KPCPSS). Positions 305 to 334 (KLCPPPKPCPPPKPCPPPKPCPPPKPCPSS) are 5 X 6 AA tandem repeats of K-[LP]-C-[PRS]-[PS]-[PS]. Positions 323–350 (KPCPPPKPCPSSESCSPPESYSLPKPLP) are disordered. Low complexity predominate over residues 332 to 346 (PSSESCSPPESYSLP).

This sequence belongs to the asfivirus CD2 homolog protein family. As to quaternary structure, both glycosylated and nonglycosylated forms interact (via C-terminus) with the host AP-1 complex. Cleaved into two fragments of 63 kDa and 26 kDa containing respectively the glycosylated N-terminus and the nonglycosylated C-terminus. A full-length 89-kDa glycosylated form also exists.

It localises to the host membrane. It is found in the virion membrane. The protein resides in the host Golgi apparatus. Its function is as follows. May play an immunosuppressive role by inhibiting lymphocyte proliferation and subsequently facilitating viral replication and generalization of infection. Responsible for viral hemadsorption, which may help viral spread. Increases virus replication in the tick vector at the step of virus uptake or replication in the tick gut. May play a role in the host Golgi reorganization to yield viral factories. May play a role in host cell penetration. In Ornithodoros (relapsing fever ticks), this protein is CD2 homolog.